The following is a 462-amino-acid chain: Proline--tRNA ligase (462 aa).

Belongs to the class-II aminoacyl-tRNA synthetase family. ProS type 3 subfamily. In terms of assembly, homodimer.

The protein localises to the cytoplasm. The enzyme catalyses tRNA(Pro) + L-proline + ATP = L-prolyl-tRNA(Pro) + AMP + diphosphate. Catalyzes the attachment of proline to tRNA(Pro) in a two-step reaction: proline is first activated by ATP to form Pro-AMP and then transferred to the acceptor end of tRNA(Pro). The polypeptide is Proline--tRNA ligase (Thermoplasma acidophilum (strain ATCC 25905 / DSM 1728 / JCM 9062 / NBRC 15155 / AMRC-C165)).